We begin with the raw amino-acid sequence, 429 residues long: TNF receptor-associated factor family protein DDB_G0267744 (429 aa).

The RING-type; degenerate zinc finger occupies 22–60 (CVICSHLQVDIYQCVEGHFACKNCFLKMIELKKQCMTCR). 2 TRAF-type zinc fingers span residues 151–203 (HHLK…GEFN) and 204–265 (NHQD…SNSE).

This sequence belongs to the TNF receptor-associated factor family.

It localises to the cytoplasm. In terms of biological role, probable adapter protein and signal transducer that links members of the tumor necrosis factor receptor family to different signaling pathways by association with the receptor cytoplasmic domain and kinases. The sequence is that of TNF receptor-associated factor family protein DDB_G0267744 from Dictyostelium discoideum (Social amoeba).